We begin with the raw amino-acid sequence, 578 residues long: CTP synthase 2 (578 aa).

Residues 305–564 (KIALVGKYTN…VAAASGTLGE (260 aa)) form the Glutamine amidotransferase type-1 domain. Catalysis depends on for GATase activity residues C404, H537, and E539.

This sequence belongs to the CTP synthase family. In terms of assembly, homodimer. Oligomerizes to a tetramer in the presence of its substrates UTP and ATP. It depends on Mg(2+) as a cofactor.

It is found in the cytoplasm. The enzyme catalyses UTP + L-glutamine + ATP + H2O = CTP + L-glutamate + ADP + phosphate + 2 H(+). It functions in the pathway pyrimidine metabolism; CTP biosynthesis via de novo pathway; CTP from UDP: step 2/2. With respect to regulation, activated by GTP. Subject to allosteric product inhibition by CTP. Inhibited by p-chloromercuriphenylsulfonic acid, N-ethylmaleimide and cyclopentenylcytosine (CPEC). Functionally, catalyzes the ATP-dependent amination of UTP to CTP with either L-glutamine or ammonia as the source of nitrogen. Plays an important role in the regulation of phospholipid synthesis. In Saccharomyces cerevisiae (strain ATCC 204508 / S288c) (Baker's yeast), this protein is CTP synthase 2 (URA8).